Consider the following 64-residue polypeptide: Large ribosomal subunit protein bL35 (64 aa).

The protein belongs to the bacterial ribosomal protein bL35 family.

This is Large ribosomal subunit protein bL35 from Pseudomonas entomophila (strain L48).